Here is a 371-residue protein sequence, read N- to C-terminus: Histidinol-phosphate aminotransferase (371 aa).

Lys-228 carries the N6-(pyridoxal phosphate)lysine modification.

Belongs to the class-II pyridoxal-phosphate-dependent aminotransferase family. Histidinol-phosphate aminotransferase subfamily. In terms of assembly, homodimer. Pyridoxal 5'-phosphate is required as a cofactor.

The catalysed reaction is L-histidinol phosphate + 2-oxoglutarate = 3-(imidazol-4-yl)-2-oxopropyl phosphate + L-glutamate. It participates in amino-acid biosynthesis; L-histidine biosynthesis; L-histidine from 5-phospho-alpha-D-ribose 1-diphosphate: step 7/9. This chain is Histidinol-phosphate aminotransferase, found in Thermosynechococcus vestitus (strain NIES-2133 / IAM M-273 / BP-1).